The chain runs to 602 residues: Elongation factor 4 (602 aa).

The 182-residue stretch at 8-189 folds into the tr-type G domain; that stretch reads KNIRNFSIIA…KIITTIPAPS (182 aa). GTP is bound by residues 20 to 25 and 136 to 139; these read DHGKST and NKID.

Belongs to the TRAFAC class translation factor GTPase superfamily. Classic translation factor GTPase family. LepA subfamily.

It is found in the cell inner membrane. It carries out the reaction GTP + H2O = GDP + phosphate + H(+). Required for accurate and efficient protein synthesis under certain stress conditions. May act as a fidelity factor of the translation reaction, by catalyzing a one-codon backward translocation of tRNAs on improperly translocated ribosomes. Back-translocation proceeds from a post-translocation (POST) complex to a pre-translocation (PRE) complex, thus giving elongation factor G a second chance to translocate the tRNAs correctly. Binds to ribosomes in a GTP-dependent manner. In Helicobacter pylori (strain HPAG1), this protein is Elongation factor 4.